Here is a 92-residue protein sequence, read N- to C-terminus: Small ribosomal subunit protein uS19 (92 aa).

The protein belongs to the universal ribosomal protein uS19 family.

Protein S19 forms a complex with S13 that binds strongly to the 16S ribosomal RNA. The protein is Small ribosomal subunit protein uS19 of Rhodopseudomonas palustris (strain HaA2).